A 223-amino-acid polypeptide reads, in one-letter code: Serum amyloid P-component (223 aa).

The N-terminal stretch at Met1–Ala19 is a signal peptide. The Pentraxin (PTX) domain occupies Asp24–Asp223. A disulfide bond links Cys55 and Cys114. Ca(2+)-binding residues include Asp77, Asn78, Glu155, Gln156, Asp157, and Gln167. A glycan (N-linked (GlcNAc...) asparagine) is linked at Asn198.

It belongs to the pentraxin family. As to quaternary structure, homopentamer. Pentraxin (or pentaxin) have a discoid arrangement of 5 non-covalently bound subunits. It depends on Ca(2+) as a cofactor.

Its subcellular location is the secreted. The chain is Serum amyloid P-component (PTX2) from Cavia porcellus (Guinea pig).